We begin with the raw amino-acid sequence, 144 residues long: Austinoid biosynthesis cluster protein S (144 aa).

This sequence belongs to the trt14 isomerase family. As to quaternary structure, homodimer.

The protein operates within secondary metabolite biosynthesis; terpenoid biosynthesis. In terms of biological role, part of the gene cluster that mediates the biosynthesis of calidodehydroaustin, a fungal meroterpenoid. The first step of the pathway is the synthesis of 3,5-dimethylorsellinic acid by the polyketide synthase ausA. 3,5-dimethylorsellinic acid is then prenylated by the polyprenyl transferase ausN. Further epoxidation by the FAD-dependent monooxygenase ausM and cyclization by the probable terpene cyclase ausL lead to the formation of protoaustinoid A. Protoaustinoid A is then oxidized to spiro-lactone preaustinoid A3 by the combined action of the FAD-binding monooxygenases ausB and ausC, and the dioxygenase ausE. Acid-catalyzed keto-rearrangement and ring contraction of the tetraketide portion of preaustinoid A3 by ausJ lead to the formation of preaustinoid A4. The aldo-keto reductase ausK, with the help of ausH, is involved in the next step by transforming preaustinoid A4 into isoaustinone which is in turn hydroxylated by the P450 monooxygenase ausI to form austinolide. The cytochrome P450 monooxygenase ausG modifies austinolide to austinol. Austinol is further acetylated to austin by the O-acetyltransferase ausP, which spontaneously changes to dehydroaustin. The cytochrome P450 monooxygenase ausR then converts dehydroaustin is into 7-dehydrodehydroaustin. The hydroxylation catalyzed by ausR permits the O-acetyltransferase ausQ to add an additional acetyl group to the molecule, leading to the formation of acetoxydehydroaustin. The short chain dehydrogenase ausT catalyzes the reduction of the double bond present between carbon atoms 1 and 2 to convert 7-dehydrodehydroaustin into 1,2-dihydro-7-hydroxydehydroaustin. AusQ catalyzes not only an acetylation reaction but also the addition of the PKS ausV diketide product to 1,2-dihydro-7-hydroxydehydroaustin, forming precalidodehydroaustin. Finally, the iron/alpha-ketoglutarate-dependent dioxygenase converts precalidodehydroaustin into calidodehydroaustin. AusS is necessary for austinoids production and may play a possible function as a regulator. Functionally, may play a possible function as a regulator. The chain is Austinoid biosynthesis cluster protein S from Aspergillus calidoustus.